A 340-amino-acid polypeptide reads, in one-letter code: Ketol-acid reductoisomerase (NADP(+)) (340 aa).

In terms of domain architecture, KARI N-terminal Rossmann spans 3 to 182 (VQMEYEKDVK…GAARVGLLET (180 aa)). Residues 26–29 (YGSQ), arginine 49, serine 53, and 83–86 (DEIQ) contribute to the NADP(+) site. Histidine 108 is a catalytic residue. Glycine 134 serves as a coordination point for NADP(+). The region spanning 183–328 (TYKEETEEDL…AELRKAMPFV (146 aa)) is the KARI C-terminal knotted domain. 4 residues coordinate Mg(2+): aspartate 191, glutamate 195, glutamate 227, and glutamate 231. Residue serine 252 coordinates substrate.

Belongs to the ketol-acid reductoisomerase family. The cofactor is Mg(2+).

The catalysed reaction is (2R)-2,3-dihydroxy-3-methylbutanoate + NADP(+) = (2S)-2-acetolactate + NADPH + H(+). It carries out the reaction (2R,3R)-2,3-dihydroxy-3-methylpentanoate + NADP(+) = (S)-2-ethyl-2-hydroxy-3-oxobutanoate + NADPH + H(+). It functions in the pathway amino-acid biosynthesis; L-isoleucine biosynthesis; L-isoleucine from 2-oxobutanoate: step 2/4. The protein operates within amino-acid biosynthesis; L-valine biosynthesis; L-valine from pyruvate: step 2/4. In terms of biological role, involved in the biosynthesis of branched-chain amino acids (BCAA). Catalyzes an alkyl-migration followed by a ketol-acid reduction of (S)-2-acetolactate (S2AL) to yield (R)-2,3-dihydroxy-isovalerate. In the isomerase reaction, S2AL is rearranged via a Mg-dependent methyl migration to produce 3-hydroxy-3-methyl-2-ketobutyrate (HMKB). In the reductase reaction, this 2-ketoacid undergoes a metal-dependent reduction by NADPH to yield (R)-2,3-dihydroxy-isovalerate. The protein is Ketol-acid reductoisomerase (NADP(+)) of Streptococcus pneumoniae (strain JJA).